Here is a 360-residue protein sequence, read N- to C-terminus: Protein Wnt-2 (360 aa).

Positions 1-25 (MNVPLGGIWLWLPLLLTWLTPEVSS) are cleaved as a signal peptide. Cystine bridges form between Cys-76–Cys-87, Cys-127–Cys-135, Cys-137–Cys-157, Cys-206–Cys-220, Cys-208–Cys-215, Cys-278–Cys-309, Cys-294–Cys-304, Cys-308–Cys-348, Cys-324–Cys-339, Cys-326–Cys-336, and Cys-331–Cys-332. Residue Ser-212 is the site of O-palmitoleoyl serine; by PORCN attachment. An N-linked (GlcNAc...) asparagine glycan is attached at Asn-295.

The protein belongs to the Wnt family. Post-translationally, palmitoleoylation is required for efficient binding to frizzled receptors. Depalmitoleoylation leads to Wnt signaling pathway inhibition. In terms of tissue distribution, in embryos in the developing allantois, pericardium heart, and ventral-lateral mesoderm; in adults in lung, brain, heart and placenta.

The protein localises to the secreted. It localises to the extracellular space. Its subcellular location is the extracellular matrix. Ligand for members of the frizzled family of seven transmembrane receptors. Functions in the canonical Wnt/beta-catenin signaling pathway. Functions as a upstream regulator of FGF10 expression. Plays an important role in embryonic lung development. May contribute to embryonic brain development by regulating the proliferation of dopaminergic precursors and neurons. The sequence is that of Protein Wnt-2 (Wnt2) from Mus musculus (Mouse).